An 81-amino-acid chain; its full sequence is Small ribosomal subunit protein bS20 (81 aa).

Residues 1–11 are compositionally biased toward basic residues; sequence MPNIKSQKKRV. Residues 1–20 form a disordered region; sequence MPNIKSQKKRVLTNEKSRAS.

The protein belongs to the bacterial ribosomal protein bS20 family.

Functionally, binds directly to 16S ribosomal RNA. In Mesoplasma florum (strain ATCC 33453 / NBRC 100688 / NCTC 11704 / L1) (Acholeplasma florum), this protein is Small ribosomal subunit protein bS20.